The primary structure comprises 455 residues: L-serine dehydratase (455 aa).

Belongs to the iron-sulfur dependent L-serine dehydratase family. [4Fe-4S] cluster is required as a cofactor.

The catalysed reaction is L-serine = pyruvate + NH4(+). It participates in carbohydrate biosynthesis; gluconeogenesis. In Streptomyces coelicolor (strain ATCC BAA-471 / A3(2) / M145), this protein is L-serine dehydratase (sdaA).